We begin with the raw amino-acid sequence, 186 residues long: Tumor necrosis factor, alpha-induced protein 8-like protein 2 B (186 aa).

This sequence belongs to the TNFAIP8 family. TNFAIP8L2 subfamily.

Its function is as follows. Acts as a negative regulator of innate and adaptive immunity by maintaining immune homeostasis. Negative regulator of Toll-like receptor and T-cell receptor function. Prevents hyperresponsiveness of the immune system and maintains immune homeostasis. Inhibits jun/ap1 and NF-kappa-B activation. Promotes Fas-induced apoptosis. The chain is Tumor necrosis factor, alpha-induced protein 8-like protein 2 B (tnfaip8l2b) from Danio rerio (Zebrafish).